Reading from the N-terminus, the 42-residue chain is Lanthionine-containing peptide SapB precursor RamS (42 aa).

Residues 1–21 (MNLFDLQSMETPKEEAMGDVE) constitute a propeptide that is removed on maturation. The disordered stretch occupies residues 1 to 21 (MNLFDLQSMETPKEEAMGDVE). Cross-links (lanthionine (Ser-Cys)) lie at residues 24 to 31 (SRASLLLC) and 34 to 41 (SSLSITTC). 2,3-didehydroalanine (Ser) is present on residues serine 27 and serine 37.

Belongs to the lanthionine-containing morphogen family. Maturation involves the enzymatic conversion of Ser into dehydrated AA and the formation of thioether bonds with cysteine, probably by RamC. This is followed by membrane translocation and cleavage of the modified precursor. The RamS precursor protein (detected by an anti-propeptide antibody and by a C-terminal His-tag) is detected from at least 16 hours post-germination; its apparent molecular weight decreases starting from about 34 hours, when its probable modifying enzyme ramC is transcribed. Surfactin, a B.subtilis cyclic lipopeptide antibiotic which prevents aerial hyphae formation in S.coelicolor, decreases localization of RamS precursor protein to the cell membrane, suggesting that processing only occurs at the cell membrane.

The protein resides in the cell membrane. The protein localises to the secreted. Its subcellular location is the spore wall. Its function is as follows. Stably accumulated precursor of SapB. Functionally, lanthionine-containing peptide devoid of antibiotic properties. A surface active peptide involved in the efficient formation of aerial mycelium when cells are grown in rich media. Has an overlapping function with the surface-active chaplin proteins; chaplins are essential on minimal medium while on rich medium both chaplins and SapB are required for efficient aerial hyphae formation. Required under conditions of high osmolarity where it may change the physical properties of the chaplin layer to allow hyphae to grow into air. Suggested to self-assemble at air-water interfaces, thus providing a film of surfactant through which nascent aerial hyphae can emerge; the aerial hyphae differentiate further into spores. Application to bald mutants (bld, unable to make aerial hyphae) restores hyphae growth. Application to chaplin negative mutants as well as ramC-ramS-ramA-ramB and ramR deletions also restores aerial hyphae growth and sporulation. Reduces surface tension of water from 72 to 30 mJ/m(2). This is Lanthionine-containing peptide SapB precursor RamS (ramS) from Streptomyces coelicolor (strain ATCC BAA-471 / A3(2) / M145).